The sequence spans 69 residues: Proteinase inhibitor (69 aa).

Serine 1 carries the post-translational modification N-acetylserine. A disulfide bond links cysteine 4 and cysteine 49.

In vitro, strong inhibitor of bovine beta-trypsin, weak inhibitor of alpha-chymotrypsin, subtilisin BPN', subtilisin Carlsberg and cathepsin G. In Linum usitatissimum (Flax), this protein is Proteinase inhibitor.